We begin with the raw amino-acid sequence, 816 residues long: Pentatricopeptide repeat-containing protein At5g12100, mitochondrial (816 aa).

A mitochondrion-targeting transit peptide spans 1–39 (MVTRLRLVSRSSRYATVKFTDSVSACSCRRLFSASTDPE). Residues 34–57 (ASTDPEPESQPEQAPPTNPVTGDE) form a disordered region. PPR repeat units lie at residues 108–142 (HDFSYLLLSVLLNESKMISEAADLFFALRNEGIYP), 143–177 (SSDSLTLLLDHLVKTKQFRVTINVFLNILESDFRP), 178–212 (SKFMYGKAIQAAVKLSDVGKGLELFNRMKHDRIYP), 213–247 (SVFIYNVLIDGLCKGKRMNDAEQLFDEMLARRLLP), 248–282 (SLITYNTLIDGYCKAGNPEKSFKVRERMKADHIEP), 283–317 (SLITFNTLLKGLFKAGMVEDAENVLKEMKDLGFVP), 318–352 (DAFTFSILFDGYSSNEKAEAALGVYETAVDSGVKM), 353–387 (NAYTCSILLNALCKEGKIEKAEEILGREMAKGLVP), 388–422 (NEVIYNTMIDGYCRKGDLVGARMKIEAMEKQGMKP), 423–457 (DHLAYNCLIRRFCELGEMENAEKEVNKMKLKGVSP), 458–492 (SVETYNILIGGYGRKYEFDKCFDILKEMEDNGTMP), 493–527 (NVVSYGTLINCLCKGSKLLEAQIVKRDMEDRGVSP), 528–562 (KVRIYNMLIDGCCSKGKIEDAFRFSKEMLKKGIEL), 563–597 (NLVTYNTLIDGLSMTGKLSEAEDLLLEISRKGLKP), 598–632 (DVFTYNSLISGYGFAGNVQRCIALYEEMKRSGIKP), 633–662 (TLKTYHLLISLCTKEGIELTERLFGEMSLK), 664–698 (DLLVYNGVLHCYAVHGDMEKAFNLQKQMIEKSIGL), 699–733 (DKTTYNSLILGQLKVGKLCEVRSLIDEMNAREMEP), 734–768 (EADTYNIIVKGHCEVKDYMSAYVWYREMQEKGFLL), and 769–803 (DVCIGNELVSGLKEEWRSKEAEIVISEMNGRMLGD).

Belongs to the PPR family. P subfamily.

Its subcellular location is the mitochondrion. The polypeptide is Pentatricopeptide repeat-containing protein At5g12100, mitochondrial (Arabidopsis thaliana (Mouse-ear cress)).